A 258-amino-acid polypeptide reads, in one-letter code: Imidazole glycerol phosphate synthase subunit HisF (258 aa).

Catalysis depends on residues D11 and D130.

Belongs to the HisA/HisF family. As to quaternary structure, heterodimer of HisH and HisF.

The protein localises to the cytoplasm. The catalysed reaction is 5-[(5-phospho-1-deoxy-D-ribulos-1-ylimino)methylamino]-1-(5-phospho-beta-D-ribosyl)imidazole-4-carboxamide + L-glutamine = D-erythro-1-(imidazol-4-yl)glycerol 3-phosphate + 5-amino-1-(5-phospho-beta-D-ribosyl)imidazole-4-carboxamide + L-glutamate + H(+). It functions in the pathway amino-acid biosynthesis; L-histidine biosynthesis; L-histidine from 5-phospho-alpha-D-ribose 1-diphosphate: step 5/9. IGPS catalyzes the conversion of PRFAR and glutamine to IGP, AICAR and glutamate. The HisF subunit catalyzes the cyclization activity that produces IGP and AICAR from PRFAR using the ammonia provided by the HisH subunit. The sequence is that of Imidazole glycerol phosphate synthase subunit HisF from Roseiflexus sp. (strain RS-1).